A 1056-amino-acid chain; its full sequence is Pleckstrin homology domain-containing family M member 1 (1056 aa).

The RUN domain maps to 41–183 (TSEDGDANTM…LSFELSYKSA (143 aa)). 3 disordered regions span residues 215-245 (QRKE…RRNQ), 277-303 (GSKS…EDSD), and 360-422 (PAQA…QAHD). Ser-219 bears the Phosphoserine mark. Residues 389–404 (PVESTSGQQPSSTVSE) are compositionally biased toward polar residues. Residues Ser-432 and Ser-435 each carry the phosphoserine modification. Residues 451–483 (SREQPLESASDHPIASYRGTPGSRPGLHRHFSQ) form a disordered region. Ser-490 bears the Phosphoserine mark. Residues 534-625 (GLMKLGTVER…WLDRVREALQ (92 aa)) form the PH 1 domain. The LIR motif lies at 632–638 (EDEWVNV). Positions 654–1056 (CLSPSDLLSE…RKYQEQNIFA (403 aa)) are interaction with RAB7A. The PH 2 domain occupies 683 to 777 (DAIKESLLYL…WRDLVRKVLA (95 aa)). The Phorbol-ester/DAG-type zinc-finger motif lies at 986 to 1040 (QHVYHCDLCTQRGFICQICQHHDIIFPFEFDTTVRCAECKTVFHQSCQAVVKKGC).

Interacts (via N- and C-terminus) with RAB7A (GTP-bound form). Simultaneously interacts with RAB7A and ARL8B; bringing about clustering and fusion of late endosomes and lysosomes. Interacts (via RUN domain) with ARL8B (GTP-bound form); the interaction is required for PLEKHM1 localization to lysosomes and for ARL8B function in delivery and degradation of endocytic and autophagic cargo in lysosomes. PLEKHM1 and PLEKHM2 compete for interaction with ARL8B. Interacts with ARL8A; the interaction is weaker than with ARL8B. Interacts with VPS41, VPS11, VPS18, VPS33A and VPS39; indicative for an association with the HOPS complex; the interactions with, at least, VPS41, VPS11, VPS18 and VPS33A require ARL8B. Interacts with GABARAP, GABARAPL, GABARAPL2, MAP1LC3A, MAP1LC3B and MAP1LC3C. Interacts with PAFAH1B. Interacts (via N- and C-terminus) with NDEL1. Interacts (via C-terminus) with MAP3K7. Interacts (via N- and C-terminus) with FAM98A. Interacts (via C-terminus) with DEF8; this interaction is weak but increased in a RAB7A-dependent manner. In colon carcinoma and breast carcinoma cells, it interacts with sialyl-lex-positive protein. In terms of assembly, (Microbial infection) Interacts with Salmonella typhimurium sifA. Expressed in placenta, liver, prostate, thymus, spleen, ovary, colon, colon carcinoma and peripheral blood lymphocytes (PBL). Weakly expressed in brain, lung, kidney, and testis. No expression in heart, skeletal muscle, pancreas and small intestine. Predominantly expressed in the breast carcinoma cell line MCF-7.

The protein localises to the autolysosome membrane. It is found in the endosome membrane. The protein resides in the late endosome membrane. Its subcellular location is the lysosome membrane. In terms of biological role, acts as a multivalent adapter protein that regulates Rab7-dependent and HOPS complex-dependent fusion events in the endolysosomal system and couples autophagic and the endocytic trafficking pathways. Acts as a dual effector of RAB7A and ARL8B that simultaneously binds these GTPases, bringing about clustering and fusion of late endosomes and lysosomes. Required for late stages of endolysosomal maturation, facilitating both endocytosis-mediated degradation of growth factor receptors and autophagosome clearance. Interaction with Arl8b is a crucial factor in the terminal maturation of autophagosomes and to mediate autophagosome-lysosome fusion. Positively regulates lysosome peripheral distribution and ruffled border formation in osteoclasts. May be involved in negative regulation of endocytic transport from early endosome to late endosome/lysosome implicating its association with Rab7. May have a role in sialyl-lex-mediated transduction of apoptotic signals. Involved in bone resorption. Its function is as follows. (Microbial infection) In case of infection contributes to Salmonella typhimurium pathogenesis by supporting the integrity of the Salmonella-containing vacuole (SCV) probably in concert with the HOPS complex and Rab7. This is Pleckstrin homology domain-containing family M member 1 from Homo sapiens (Human).